We begin with the raw amino-acid sequence, 383 residues long: Hippurate hydrolase (383 aa).

This sequence belongs to the peptidase M20 family.

The catalysed reaction is N-benzoylglycine + H2O = benzoate + glycine. Its function is as follows. Cleaves hippuric acid into benzoic acid and glycine. The polypeptide is Hippurate hydrolase (Campylobacter jejuni subsp. jejuni serotype O:2 (strain ATCC 700819 / NCTC 11168)).